A 100-amino-acid polypeptide reads, in one-letter code: Cell division topological specificity factor (100 aa).

It belongs to the MinE family.

In terms of biological role, prevents the cell division inhibition by proteins MinC and MinD at internal division sites while permitting inhibition at polar sites. This ensures cell division at the proper site by restricting the formation of a division septum at the midpoint of the long axis of the cell. In Blochmanniella floridana, this protein is Cell division topological specificity factor.